The following is a 143-amino-acid chain: WW domain-containing protein C660.05 (143 aa).

Residues 9 to 44 form the WW domain; sequence GLPAGWVAQWDPTYQAYFYINETFEGAQPQWEPPIP. The interval 115 to 143 is disordered; the sequence is HHGPLHGPHGGFGGRGGGRMGGRGGRGRR.

This is WW domain-containing protein C660.05 from Schizosaccharomyces pombe (strain 972 / ATCC 24843) (Fission yeast).